The chain runs to 1029 residues: Multidrug resistance protein MdtC (1029 aa).

Helical transmembrane passes span 15-35, 333-353, 360-380, 387-407, 431-451, 469-489, 528-548, 853-873, 897-917, 953-973, and 984-1004; these read ILLS…LPVA, EVEQ…FLFL, LIPA…MYLC, LSLM…IVAL, VGFT…PLLL, VAIG…CGWL, LVGL…ISIP, VILI…LYES, AFDA…IGIV, PIMM…IASG, and ITIV…TPVV.

This sequence belongs to the resistance-nodulation-cell division (RND) (TC 2.A.6) family. MdtC subfamily. As to quaternary structure, part of a tripartite efflux system composed of MdtA, MdtB and MdtC. MdtC forms a heteromultimer with MdtB.

It localises to the cell inner membrane. In Cronobacter sakazakii (strain ATCC BAA-894) (Enterobacter sakazakii), this protein is Multidrug resistance protein MdtC.